Here is a 312-residue protein sequence, read N- to C-terminus: Methionyl-tRNA formyltransferase (312 aa).

109 to 112 is a binding site for (6S)-5,6,7,8-tetrahydrofolate; sequence SLLP.

The protein belongs to the Fmt family.

It catalyses the reaction L-methionyl-tRNA(fMet) + (6R)-10-formyltetrahydrofolate = N-formyl-L-methionyl-tRNA(fMet) + (6S)-5,6,7,8-tetrahydrofolate + H(+). Attaches a formyl group to the free amino group of methionyl-tRNA(fMet). The formyl group appears to play a dual role in the initiator identity of N-formylmethionyl-tRNA by promoting its recognition by IF2 and preventing the misappropriation of this tRNA by the elongation apparatus. This Ruminiclostridium cellulolyticum (strain ATCC 35319 / DSM 5812 / JCM 6584 / H10) (Clostridium cellulolyticum) protein is Methionyl-tRNA formyltransferase.